Here is a 348-residue protein sequence, read N- to C-terminus: Rhodopsin (348 aa).

Methionine 1 carries the N-acetylmethionine modification. Residues 1-36 are Extracellular-facing; it reads MNGTEGLNFYVPFSNKTGVVRSPFEYPQYYLAEPWQ. Residues asparagine 2 and asparagine 15 are each glycosylated (N-linked (GlcNAc...) asparagine). Residues 37-61 traverse the membrane as a helical segment; the sequence is FSVLAAYMFLLIVLGFPINFLTLYV. The Cytoplasmic segment spans residues 62–73; that stretch reads TVQHKKLRTPLN. Residues 74–99 traverse the membrane as a helical segment; the sequence is YILLNLAVANLFMVFGGFTTTLYTSL. Residues 100–111 are Extracellular-facing; the sequence is HAYFVFGPTGCN. An intrachain disulfide couples cysteine 110 to cysteine 187. Residues 112–133 form a helical membrane-spanning segment; that stretch reads LEGFFATLGGEIALWSLVVLAI. The 'Ionic lock' involved in activated form stabilization signature appears at 134–136; it reads ERY. The Cytoplasmic portion of the chain corresponds to 134–152; the sequence is ERYVVVCKPMSNFRFGENH. Residues 153 to 173 traverse the membrane as a helical segment; that stretch reads AIMGLALTWIMAMACAAAPLV. The Extracellular segment spans residues 174-202; sequence GWSRYIPEGMQCSCGIDYYTSRQEVNNES. Glutamate 201 serves as a coordination point for Zn(2+). Residues 203 to 227 traverse the membrane as a helical segment; the sequence is FVIYMFVVHFTIPLVIIFFCYGQLV. Over 228-252 the chain is Cytoplasmic; it reads FTVKEAAAQQQESATTQKAEKEVTR. A helical transmembrane segment spans residues 253-274; it reads MVIIMVVAFLICWVPYASVAFY. The Extracellular segment spans residues 275-286; that stretch reads IFTHQGSDFGPI. Glutamine 279 provides a ligand contact to Zn(2+). The chain crosses the membrane as a helical span at residues 287–306; it reads FMTIPSFFAKSSSIYNPVIY. At lysine 296 the chain carries N6-(retinylidene)lysine. Residues 307 to 348 are Cytoplasmic-facing; that stretch reads IMMNKQFRNCMLTTLCCGRNPLGDDEASTTASKTETSQVAPA. 2 S-palmitoyl cysteine lipidation sites follow: cysteine 322 and cysteine 323. The residue at position 334 (serine 334) is a Phosphoserine. A phosphothreonine mark is found at threonine 335 and threonine 336. Serine 338 is subject to Phosphoserine. Residues threonine 340 and threonine 342 each carry the phosphothreonine modification. Serine 343 is subject to Phosphoserine.

Belongs to the G-protein coupled receptor 1 family. Opsin subfamily. As to quaternary structure, homodimer. May form a complex composed of RHO, GRK1 and RCVRN in a Ca(2+)-dependent manner; RCVRN prevents the interaction between GRK1 and RHO. Interacts with GRK1. Interacts (phosphorylated form) with SAG. Interacts with GNAT1. Interacts with GNAT3. SAG and G-proteins compete for a common binding site. Interacts with PRCD; the interaction promotes PRCD stability. Forms a complex with ASAP1 and ARF4. Forms a complex with ASAP1, RAB11A, Rabin8/RAB3IP, ARF4 and RAB11FIP3; the complex regulates Golgi-to-cilia rhodopsin/RHO transport in photoreceptors. In terms of processing, contains one covalently linked retinal chromophore. Upon light absorption, the covalently bound 11-cis-retinal is converted to all-trans-retinal. After hydrolysis of the Schiff base and release of the covalently bound all-trans-retinal, active rhodopsin is regenerated by binding of a fresh molecule of 11-cis-retinal.

The protein resides in the membrane. Its subcellular location is the cell projection. The protein localises to the cilium. It is found in the photoreceptor outer segment. In terms of biological role, photoreceptor required for image-forming vision at low light intensity. Light-induced isomerization of 11-cis to all-trans retinal triggers a conformational change that activates signaling via G-proteins. Signaling mediates the activation of phospholipase C. Subsequent receptor phosphorylation mediates displacement of the bound G-protein alpha subunit by arrestin and terminates signaling. The sequence is that of Rhodopsin (RHO) from Tursiops truncatus (Atlantic bottle-nosed dolphin).